Reading from the N-terminus, the 287-residue chain is MKRIFLLIATNMAILLVASIVMSILGVNTSTMSGLLVFAAIFGFGGAFISLAISKWMAKKTMGCEVITNPRDNTERWLVETVARQAEQAGIKMPEVAIYQSQEFNAFATGPSKNNSLVAVSSGLLYGMNHDEIEAVLAHEVSHVANGDMVTLTLIQGVVNTFVIFAARVVAGIINNFVASNDEEGEGLGMFAYMAVVFVLDMLFGILASIIVAYFSRIREFKADEGGARLAGKEKMIAALDRLKQGPETGAMPASMSALGINGKKSMAELMMSHPPLDKRIAALRAS.

A run of 2 helical transmembrane segments spans residues 4-24 (IFLLIATNMAILLVASIVMSI) and 33-53 (SGLLVFAAIFGFGGAFISLAI). Position 139 (His-139) interacts with Zn(2+). Glu-140 is an active-site residue. His-143 contributes to the Zn(2+) binding site. Helical transmembrane passes span 154 to 174 (LIQGVVNTFVIFAARVVAGII) and 195 to 215 (AVVFVLDMLFGILASIIVAYF). Glu-220 provides a ligand contact to Zn(2+).

This sequence belongs to the peptidase M48B family. Requires Zn(2+) as cofactor.

The protein resides in the cell inner membrane. In Shewanella piezotolerans (strain WP3 / JCM 13877), this protein is Protease HtpX.